Consider the following 429-residue polypeptide: MQFKNALTATAILSASALAANSTTSIPSSCSIGTSATATAQADLDKISGCSTIVGNLTITGDLGSAALASIQEIDGSLTIFNSSSLSSFSADSIKKITGDLNMQELIILTSASFGSLQEVDSINMVTLPAISTFSTDLQNANNIIVSDTTLESVEGFSTLKKVNVFNINNNRYLNSFQSSLESVSDSLQFSSNGDNTTLAFDNLVWANNITLRDVNSISFGSLQTVNASLGFINNTLPSLNLTQLSKVGQSLSIVSNDELSKAAFSNLTTVGGGFIIANNTQLKVIDGFNKVQTVGGAIEVTGNFSTLDLSSLKSVRGGANFDSSSSNFSCNALKKLQSNGAIQGDSFVCKNGATSTSVKLSSTSTESSKSSATSSASSSGDASNAQANVSASASSSSSSSKKSKGAAPELVPATSFMGVVAAVGVALL.

A signal peptide spans 1 to 19 (MQFKNALTATAILSASALA). N-linked (GlcNAc...) asparagine glycosylation is found at N21, N56, N82, N196, N209, N227, N234, N241, N267, N279, N304, and N328. S339 carries the phosphoserine modification. The span at 361–401 (LSSTSTESSKSSATSSASSSGDASNAQANVSASASSSSSSS) shows a compositional bias: low complexity. A disordered region spans residues 361-410 (LSSTSTESSKSSATSSASSSGDASNAQANVSASASSSSSSSKKSKGAAPE). N389 carries an N-linked (GlcNAc...) asparagine glycan. The GPI-anchor amidated glycine moiety is linked to residue G406. The propeptide at 407–429 (AAPELVPATSFMGVVAAVGVALL) is removed in mature form.

The protein belongs to the SPS2 family. Post-translationally, the GPI-anchor is attached to the protein in the endoplasmic reticulum and serves to target the protein to the cell surface. There, the glucosamine-inositol phospholipid moiety is cleaved off and the GPI-modified mannoprotein is covalently attached via its lipidless GPI glycan remnant to the 1,6-beta-glucan of the outer cell wall layer. In terms of processing, extensively N-glycosylated.

It localises to the cell membrane. The protein localises to the secreted. It is found in the cell wall. Required for proper cell wall integrity and for the correct assembly of the mannoprotein outer layer of the cell wall. Important for apical bud growth. The protein is Cell wall protein ECM33 (ECM33) of Saccharomyces cerevisiae (strain ATCC 204508 / S288c) (Baker's yeast).